The sequence spans 41 residues: uncharacterized protein (41 aa).

Residues 1-12 show a composition bias toward basic and acidic residues; the sequence is MTRNVVRQEFEA. The segment at 1 to 23 is disordered; sequence MTRNVVRQEFEAPGKPQDSSQQD.

This is an uncharacterized protein from Homo sapiens (Human).